A 536-amino-acid polypeptide reads, in one-letter code: DEAD-box ATP-dependent RNA helicase 41 (536 aa).

Residues 1–10 (MEQEENHSAD) are compositionally biased toward basic and acidic residues. The tract at residues 1-25 (MEQEENHSADHLSAQPGNGNELEES) is disordered. An HIT-type zinc finger spans residues 40–69 (GEPRCVICGRYGEYICDQTDDDICSVECKT). The Q motif signature appears at 137-165 (MCFSSSGLPEKLVLNLEAAGYVMPTPVQM). The 177-residue stretch at 168 to 344 (IPSSICNRSL…NSLAKNAIHI (177 aa)) folds into the Helicase ATP-binding domain. Position 181–188 (181–188 (ADTGSGKT)) interacts with ATP. Positions 293–296 (DEVD) match the DEAD box motif. Residues 355 to 518 (SVKQVVIWVE…PIPRELANSK (164 aa)) form the Helicase C-terminal domain.

This sequence belongs to the DEAD box helicase family. DDX59 subfamily.

It carries out the reaction ATP + H2O = ADP + phosphate + H(+). In Oryza sativa subsp. japonica (Rice), this protein is DEAD-box ATP-dependent RNA helicase 41.